We begin with the raw amino-acid sequence, 275 residues long: Nuclear egress protein 2 (275 aa).

Residues 1–251 (MDSYNYRDFA…SERVKRRPVR (251 aa)) lie on the Perinuclear space side of the membrane. Positions 197 to 221 (CDRSNGIVSPREHRECRERQKRRPT) are disordered. Residues 252 to 272 (IAAAILAFVFVAVILAIATKG) form a helical membrane-spanning segment. Residues 273-275 (RLF) are Nuclear-facing.

This sequence belongs to the herpesviridae NEC2 protein family. As to quaternary structure, forms a heterohexameric complex with NEC1. Post-translationally, phosphorylated.

It localises to the host nucleus inner membrane. Plays an essential role in virion nuclear egress, the first step of virion release from infected cell. Within the host nucleus, NEC1 interacts with the newly formed capsid through the vertexes and directs it to the inner nuclear membrane by associating with NEC2. Induces the budding of the capsid at the inner nuclear membrane as well as its envelopment into the perinuclear space. There, the NEC1/NEC2 complex promotes the fusion of the enveloped capsid with the outer nuclear membrane and the subsequent release of the viral capsid into the cytoplasm where it will reach the secondary budding sites in the host Golgi or trans-Golgi network. The polypeptide is Nuclear egress protein 2 (Equus caballus (Horse)).